A 313-amino-acid polypeptide reads, in one-letter code: MSKVTVVGAGNVGATCANVLAFNEVADEVVMLDVKEGVSEGKAMDMMQTAQLLGFDTTVVGCTNDYAQTANSDVVVITSGIPRKPGMTREELIGVNAGIVKSVAENILKYSPNAILVVISNPMDTMTYLSLKALGLPKNRIIGMGGALDSSRFKYFLSQALGCNANEVEGMVIGGHGDTTMIPLTRFATYKGMPVTNFISEEKLNEVAAATMVGGATLTKLLGTSAWYAPGAAGAFVVESILHDQKKMIPCSVYLEGEYGESDICIGVPVILGKNGIEKIVELDLNADEKAKFAASAKAVHGTNAALKEVGAL.

NAD(+)-binding positions include 8-13 and aspartate 33; that span reads GAGNVG. 2 residues coordinate substrate: arginine 83 and arginine 89. Residues asparagine 96 and 119–121 each bind NAD(+); that span reads ISN. Residues asparagine 121 and arginine 152 each contribute to the substrate site. Histidine 176 functions as the Proton acceptor in the catalytic mechanism.

The protein belongs to the LDH/MDH superfamily. MDH type 3 family.

It catalyses the reaction (S)-malate + NAD(+) = oxaloacetate + NADH + H(+). Catalyzes the reversible oxidation of malate to oxaloacetate. The protein is Malate dehydrogenase of Bacteroides thetaiotaomicron (strain ATCC 29148 / DSM 2079 / JCM 5827 / CCUG 10774 / NCTC 10582 / VPI-5482 / E50).